The sequence spans 340 residues: Coproporphyrin III ferrochelatase (340 aa).

Residues S52 and Y116 each coordinate Fe-coproporphyrin III. Residues H172 and E255 each contribute to the Fe(2+) site.

It belongs to the ferrochelatase family.

It is found in the cytoplasm. It carries out the reaction Fe-coproporphyrin III + 2 H(+) = coproporphyrin III + Fe(2+). Its pathway is porphyrin-containing compound metabolism; protoheme biosynthesis. Involved in coproporphyrin-dependent heme b biosynthesis. Catalyzes the insertion of ferrous iron into coproporphyrin III to form Fe-coproporphyrin III. The sequence is that of Coproporphyrin III ferrochelatase from Mycobacterium marinum (strain ATCC BAA-535 / M).